Consider the following 259-residue polypeptide: Large ribosomal subunit protein uL2m (259 aa).

Residues 234-259 (VAMNPVDHPNGGRTKTPKPERSPGVE) are disordered. Residues 250-259 (PKPERSPGVE) are compositionally biased toward basic and acidic residues.

Belongs to the universal ribosomal protein uL2 family.

It localises to the mitochondrion. This Paramecium tetraurelia protein is Large ribosomal subunit protein uL2m (RPL2).